The chain runs to 264 residues: Vitellin-degrading protease (264 aa).

The first 15 residues, 1–15 (MTNSLLICFTILGLA), serve as a signal peptide directing secretion. A propeptide spans 16-27 (ASSPTKPIGDIR) (activation peptide). In terms of domain architecture, Peptidase S1 spans 28–253 (IVGGEDIVIT…LREWVDENIT (226 aa)). Cysteines 53 and 69 form a disulfide. Catalysis depends on charge relay system residues His68 and Asp113. Residues Cys178 and Cys194 are joined by a disulfide bond. Substrate is bound at residue Asp203. Residues Cys205 and Cys229 are joined by a disulfide bond. Catalysis depends on Ser209, which acts as the Charge relay system. A glycan (N-linked (GlcNAc...) asparagine) is linked at Asn251.

This sequence belongs to the peptidase S1 family. Cleavage after Arg-27 leads to beta-VTN protease and subsequent cleavage after Arg-89 leads to alpha-VTN.

Responsible for the degradation of vitellin in eggs at the head pigmentation stage. The polypeptide is Vitellin-degrading protease (Bombyx mori (Silk moth)).